The sequence spans 415 residues: Gamma-glutamyl phosphate reductase (415 aa).

Belongs to the gamma-glutamyl phosphate reductase family.

The protein localises to the cytoplasm. The catalysed reaction is L-glutamate 5-semialdehyde + phosphate + NADP(+) = L-glutamyl 5-phosphate + NADPH + H(+). It functions in the pathway amino-acid biosynthesis; L-proline biosynthesis; L-glutamate 5-semialdehyde from L-glutamate: step 2/2. In terms of biological role, catalyzes the NADPH-dependent reduction of L-glutamate 5-phosphate into L-glutamate 5-semialdehyde and phosphate. The product spontaneously undergoes cyclization to form 1-pyrroline-5-carboxylate. The polypeptide is Gamma-glutamyl phosphate reductase (Oceanobacillus iheyensis (strain DSM 14371 / CIP 107618 / JCM 11309 / KCTC 3954 / HTE831)).